Here is a 115-residue protein sequence, read N- to C-terminus: Large ribosomal subunit protein bL19 (115 aa).

It belongs to the bacterial ribosomal protein bL19 family.

Its function is as follows. This protein is located at the 30S-50S ribosomal subunit interface and may play a role in the structure and function of the aminoacyl-tRNA binding site. The protein is Large ribosomal subunit protein bL19 of Latilactobacillus sakei subsp. sakei (strain 23K) (Lactobacillus sakei subsp. sakei).